A 460-amino-acid polypeptide reads, in one-letter code: Bifunctional protein GlmU (460 aa).

The tract at residues Met1–Arg235 is pyrophosphorylase. UDP-N-acetyl-alpha-D-glucosamine is bound by residues Leu9–Gly12, Lys23, Gln76, and Gly81–Thr82. Asp109 serves as a coordination point for Mg(2+). Gly146, Glu161, Asn176, and Asn233 together coordinate UDP-N-acetyl-alpha-D-glucosamine. Asn233 is a binding site for Mg(2+). The interval Val236–Glu256 is linker. The interval Gly257 to Arg460 is N-acetyltransferase. UDP-N-acetyl-alpha-D-glucosamine contacts are provided by Arg338 and Lys356. Catalysis depends on His368, which acts as the Proton acceptor. Positions 371 and 382 each coordinate UDP-N-acetyl-alpha-D-glucosamine. Residues Asn391 to Tyr392 and Ala428 contribute to the acetyl-CoA site.

This sequence in the N-terminal section; belongs to the N-acetylglucosamine-1-phosphate uridyltransferase family. The protein in the C-terminal section; belongs to the transferase hexapeptide repeat family. Homotrimer. Mg(2+) serves as cofactor.

The protein resides in the cytoplasm. The enzyme catalyses alpha-D-glucosamine 1-phosphate + acetyl-CoA = N-acetyl-alpha-D-glucosamine 1-phosphate + CoA + H(+). It carries out the reaction N-acetyl-alpha-D-glucosamine 1-phosphate + UTP + H(+) = UDP-N-acetyl-alpha-D-glucosamine + diphosphate. Its pathway is nucleotide-sugar biosynthesis; UDP-N-acetyl-alpha-D-glucosamine biosynthesis; N-acetyl-alpha-D-glucosamine 1-phosphate from alpha-D-glucosamine 6-phosphate (route II): step 2/2. It functions in the pathway nucleotide-sugar biosynthesis; UDP-N-acetyl-alpha-D-glucosamine biosynthesis; UDP-N-acetyl-alpha-D-glucosamine from N-acetyl-alpha-D-glucosamine 1-phosphate: step 1/1. The protein operates within bacterial outer membrane biogenesis; LPS lipid A biosynthesis. Its function is as follows. Catalyzes the last two sequential reactions in the de novo biosynthetic pathway for UDP-N-acetylglucosamine (UDP-GlcNAc). The C-terminal domain catalyzes the transfer of acetyl group from acetyl coenzyme A to glucosamine-1-phosphate (GlcN-1-P) to produce N-acetylglucosamine-1-phosphate (GlcNAc-1-P), which is converted into UDP-GlcNAc by the transfer of uridine 5-monophosphate (from uridine 5-triphosphate), a reaction catalyzed by the N-terminal domain. The protein is Bifunctional protein GlmU of Bifidobacterium adolescentis (strain ATCC 15703 / DSM 20083 / NCTC 11814 / E194a).